The following is a 504-amino-acid chain: Ribosomal protein uS12 methylthiotransferase RimO (504 aa).

Residues 19–135 (KKVGFVSLGC…ILAASGIEPR (117 aa)) form the MTTase N-terminal domain. Positions 28, 64, 98, 214, 218, and 221 each coordinate [4Fe-4S] cluster. Residues 200–430 (ATPKYMAYIK…MSLQKQISKK (231 aa)) form the Radical SAM core domain. The TRAM domain occupies 433–504 (KALIGREFDV…HDYDLVARLL (72 aa)).

This sequence belongs to the methylthiotransferase family. RimO subfamily. The cofactor is [4Fe-4S] cluster.

It localises to the cytoplasm. It catalyses the reaction L-aspartate(89)-[ribosomal protein uS12]-hydrogen + (sulfur carrier)-SH + AH2 + 2 S-adenosyl-L-methionine = 3-methylsulfanyl-L-aspartate(89)-[ribosomal protein uS12]-hydrogen + (sulfur carrier)-H + 5'-deoxyadenosine + L-methionine + A + S-adenosyl-L-homocysteine + 2 H(+). Its function is as follows. Catalyzes the methylthiolation of an aspartic acid residue of ribosomal protein uS12. The sequence is that of Ribosomal protein uS12 methylthiotransferase RimO from Koribacter versatilis (strain Ellin345).